A 329-amino-acid chain; its full sequence is L-carnitine dehydrogenase (329 aa).

19-24 contacts NAD(+); sequence GAGVIG.

Belongs to the 3-hydroxyacyl-CoA dehydrogenase family. L-carnitine dehydrogenase subfamily. In terms of assembly, homodimer.

It is found in the cytoplasm. The catalysed reaction is carnitine + NAD(+) = 3-dehydrocarnitine + NADH + H(+). The protein operates within amine and polyamine metabolism; carnitine metabolism. Its function is as follows. Catalyzes the NAD(+)-dependent oxidation of L-carnitine to 3-dehydrocarnitine. This chain is L-carnitine dehydrogenase, found in Nocardiopsis dassonvillei (strain ATCC 23218 / DSM 43111 / CIP 107115 / JCM 7437 / KCTC 9190 / NBRC 14626 / NCTC 10488 / NRRL B-5397 / IMRU 509) (Actinomadura dassonvillei).